We begin with the raw amino-acid sequence, 191 residues long: Outer membrane lipoprotein DolP (191 aa).

Positions 1–18 (MKAFSPLAVLISALLLQG) are cleaved as a signal peptide. Cysteine 19 is lipidated: N-palmitoyl cysteine. A lipid anchor (S-diacylglycerol cysteine) is attached at cysteine 19. BON domains lie at 46–115 (DDGT…RQGQ) and 124–191 (NDTW…TYIK).

This sequence belongs to the lipoprotein DolP family.

It is found in the cell outer membrane. Its function is as follows. Plays an important role in maintaining outer membrane integrity. Contributes to virulence. The chain is Outer membrane lipoprotein DolP from Salmonella typhimurium (strain LT2 / SGSC1412 / ATCC 700720).